We begin with the raw amino-acid sequence, 77 residues long: Dermaseptin-B9 (77 aa).

A signal peptide spans 1 to 22 (MAFLKKSLFLVLFLGLVSLSVC). 2 consecutive propeptides follow at residues 23 to 43 (EEEK…QSEE) and 76 to 77 (EQ).

Belongs to the frog skin active peptide (FSAP) family. Dermaseptin subfamily. As to expression, expressed by the skin glands.

It localises to the secreted. Has antimicrobial activity. Exhibits a bactericidal activity towards several species of mollicutes, firmicutes and gracilicutes. This peptide is membranotropic and it efficiently depolarizes the plasma membrane. This is Dermaseptin-B9 (DRG3) from Phyllomedusa bicolor (Two-colored leaf frog).